We begin with the raw amino-acid sequence, 117 residues long: Large ribosomal subunit protein bL20 (117 aa).

Belongs to the bacterial ribosomal protein bL20 family.

Its function is as follows. Binds directly to 23S ribosomal RNA and is necessary for the in vitro assembly process of the 50S ribosomal subunit. It is not involved in the protein synthesizing functions of that subunit. The sequence is that of Large ribosomal subunit protein bL20 from Campylobacter lari (strain RM2100 / D67 / ATCC BAA-1060).